We begin with the raw amino-acid sequence, 647 residues long: Leucine-rich repeat transmembrane protein FLRT3 (647 aa).

The signal sequence occupies residues Met-1–Ala-28. The Extracellular portion of the chain corresponds to Lys-29 to Pro-526. In terms of domain architecture, LRRNT spans Pro-30–Asn-62. 2 cysteine pairs are disulfide-bonded: Cys-31–Cys-37 and Cys-35–Cys-44. LRR repeat units follow at residues Glu-58–Leu-82, Arg-83–Tyr-105, Lys-107–Gln-126, Ile-127–Asp-152, Ile-154–Glu-179, Arg-181–Asp-197, Leu-198–Asn-223, Val-225–Gly-246, Thr-247–Tyr-269, and Leu-270–Asp-293. N-linked (GlcNAc...) asparagine glycosylation occurs at Asn-226. Residues Asn-305 to Lys-356 enclose the LRRCT domain. A disulfide bond links Cys-309 and Cys-334. A Fibronectin type-III domain is found at Pro-404–Leu-502. The helical transmembrane segment at Leu-527 to Cys-547 threads the bilayer. Residues Trp-548 to Ser-647 lie on the Cytoplasmic side of the membrane. Positions Leu-620 to Ser-647 are disordered.

Post-translationally, N-glycosylated. In terms of processing, proteolytic cleavage in the juxtamembrane region gives rise to a soluble ectodomain. Cleavage is probably effected by a metalloprotease.

It is found in the cell membrane. The protein resides in the endoplasmic reticulum membrane. Its subcellular location is the cell junction. The protein localises to the focal adhesion. It localises to the secreted. It is found in the cell projection. The protein resides in the axon. Its subcellular location is the growth cone membrane. Its function is as follows. Modulates the structure and function of the apical ectodermal ridge (AER) that controls embryonic limb development. Functions in cell-cell adhesion, cell migration and axon guidance, exerting an attractive or repulsive role depending on its interaction partners. Plays a role in the spatial organization of brain neurons. Plays a role in vascular development. Plays a role in cell-cell adhesion via its interaction with latrophilins that are expressed at the surface of adjacent cells. Mediates axon attraction towards cells expressing NTN1. Mediates axon growth cone collapse and plays a repulsive role in neuron guidance via its interaction with UNC-5 family members. Plays a role in the regulation of the density of glutamaergic synapses. Plays a role in fibroblast growth factor-mediated signaling cascades. Required for normal morphogenesis during embryonic development, but not for normal embryonic patterning. The polypeptide is Leucine-rich repeat transmembrane protein FLRT3 (FLRT3) (Gallus gallus (Chicken)).